The following is a 446-amino-acid chain: Chromosomal replication initiator protein DnaA (446 aa).

The interval 1–72 (MKNISDLWNQ…ADTIYDLTGE (72 aa)) is domain I, interacts with DnaA modulators. Residues 72–109 (EELSIKFVIPQNQNEEDFMPKSPIKKMSKEEPADFPQN) form a domain II region. Positions 110–326 (MLNPKYTFDT…GALIRVVAYS (217 aa)) are domain III, AAA+ region. The ATP site is built by Gly-154, Gly-156, Lys-157, and Thr-158. The segment at 327–446 (SLINKDINAD…QIKEIKEQLR (120 aa)) is domain IV, binds dsDNA.

This sequence belongs to the DnaA family. In terms of assembly, oligomerizes as a right-handed, spiral filament on DNA at oriC.

The protein localises to the cytoplasm. Functionally, plays an essential role in the initiation and regulation of chromosomal replication. ATP-DnaA binds to the origin of replication (oriC) to initiate formation of the DNA replication initiation complex once per cell cycle. Binds the DnaA box (a 9 base pair repeat at the origin) and separates the double-stranded (ds)DNA. Forms a right-handed helical filament on oriC DNA; dsDNA binds to the exterior of the filament while single-stranded (ss)DNA is stabiized in the filament's interior. The ATP-DnaA-oriC complex binds and stabilizes one strand of the AT-rich DNA unwinding element (DUE), permitting loading of DNA polymerase. After initiation quickly degrades to an ADP-DnaA complex that is not apt for DNA replication. Binds acidic phospholipids. This Bacillus licheniformis (strain ATCC 14580 / DSM 13 / JCM 2505 / CCUG 7422 / NBRC 12200 / NCIMB 9375 / NCTC 10341 / NRRL NRS-1264 / Gibson 46) protein is Chromosomal replication initiator protein DnaA.